The primary structure comprises 62 residues: Photosystem II reaction center protein Z (62 aa).

The next 2 membrane-spanning stretches (helical) occupy residues 8 to 28 (AVFALIVTSFLLVIGVPVVLA) and 41 to 61 (FSGASLWIGLVFLVGILNSFV).

The protein belongs to the PsbZ family. In terms of assembly, PSII is composed of 1 copy each of membrane proteins PsbA, PsbB, PsbC, PsbD, PsbE, PsbF, PsbH, PsbI, PsbJ, PsbK, PsbL, PsbM, PsbT, PsbY, PsbZ, Psb30/Ycf12, at least 3 peripheral proteins of the oxygen-evolving complex and a large number of cofactors. It forms dimeric complexes.

Its subcellular location is the plastid. It is found in the chloroplast thylakoid membrane. In terms of biological role, may control the interaction of photosystem II (PSII) cores with the light-harvesting antenna, regulates electron flow through the 2 photosystem reaction centers. PSII is a light-driven water plastoquinone oxidoreductase, using light energy to abstract electrons from H(2)O, generating a proton gradient subsequently used for ATP formation. The polypeptide is Photosystem II reaction center protein Z (Zygnema circumcarinatum (Green alga)).